Here is a 187-residue protein sequence, read N- to C-terminus: Adenine phosphoribosyltransferase (187 aa).

The protein belongs to the purine/pyrimidine phosphoribosyltransferase family. As to quaternary structure, homodimer.

The protein resides in the cytoplasm. It catalyses the reaction AMP + diphosphate = 5-phospho-alpha-D-ribose 1-diphosphate + adenine. It participates in purine metabolism; AMP biosynthesis via salvage pathway; AMP from adenine: step 1/1. Catalyzes a salvage reaction resulting in the formation of AMP, that is energically less costly than de novo synthesis. The polypeptide is Adenine phosphoribosyltransferase (Paracoccus denitrificans (strain Pd 1222)).